A 408-amino-acid chain; its full sequence is Aminoacylase-1 (408 aa).

Position 76 (His-76) interacts with Zn(2+). Asp-78 is a catalytic residue. Asp-109 provides a ligand contact to Zn(2+). Glu-143 (proton acceptor) is an active-site residue. Zn(2+)-binding residues include Glu-144, Glu-172, and His-379.

It belongs to the peptidase M20A family. Homodimer. Requires Zn(2+) as cofactor.

It localises to the cytoplasm. It catalyses the reaction an N-acyl-L-amino acid + H2O = an L-alpha-amino acid + a carboxylate. It carries out the reaction an N-acetyl-L-cysteine-S-conjugate + H2O = an S-substituted L-cysteine + acetate. In terms of biological role, involved in the hydrolysis of N-acylated or N-acetylated amino acids (except L-aspartate). This chain is Aminoacylase-1 (acy1), found in Dictyostelium discoideum (Social amoeba).